The chain runs to 37 residues: Large ribosomal subunit protein bL36c (37 aa).

The protein belongs to the bacterial ribosomal protein bL36 family.

It is found in the plastid. The protein resides in the chloroplast. This Staurastrum punctulatum (Green alga) protein is Large ribosomal subunit protein bL36c.